The chain runs to 305 residues: uncharacterized protein (305 aa).

10 consecutive transmembrane segments (helical) span residues 11-31 (LLLA…KAAL), 37-57 (LLFA…VALP), 70-90 (IYLV…TIGL), 97-117 (LFSA…WLWL), 126-146 (VIGL…GFGG), 148-168 (ISVI…LGTV), 180-200 (IWMV…SGFW), 217-237 (LLFI…TLVG), 244-264 (VASY…IFLH), and 265-285 (EPLT…ICLV). EamA domains are found at residues 18–141 (IMWG…VISA) and 161–287 (VSWA…LVNT).

It belongs to the EamA transporter family.

The protein resides in the cell membrane. This is an uncharacterized protein from Bacillus subtilis (strain 168).